Here is a 366-residue protein sequence, read N- to C-terminus: tRNA 2-selenouridine synthase (366 aa).

In terms of domain architecture, Rhodanese spans 12–135; that stretch reads FLNDVPMMDA…MRTFLLDTLH (124 aa). The active-site S-selanylcysteine intermediate is Cys-95.

The protein belongs to the SelU family. Monomer.

It carries out the reaction 5-methylaminomethyl-2-thiouridine(34) in tRNA + selenophosphate + (2E)-geranyl diphosphate + H2O + H(+) = 5-methylaminomethyl-2-selenouridine(34) in tRNA + (2E)-thiogeraniol + phosphate + diphosphate. The catalysed reaction is 5-methylaminomethyl-2-thiouridine(34) in tRNA + (2E)-geranyl diphosphate = 5-methylaminomethyl-S-(2E)-geranyl-thiouridine(34) in tRNA + diphosphate. The enzyme catalyses 5-methylaminomethyl-S-(2E)-geranyl-thiouridine(34) in tRNA + selenophosphate + H(+) = 5-methylaminomethyl-2-(Se-phospho)selenouridine(34) in tRNA + (2E)-thiogeraniol. It catalyses the reaction 5-methylaminomethyl-2-(Se-phospho)selenouridine(34) in tRNA + H2O = 5-methylaminomethyl-2-selenouridine(34) in tRNA + phosphate. Its function is as follows. Involved in the post-transcriptional modification of the uridine at the wobble position (U34) of tRNA(Lys), tRNA(Glu) and tRNA(Gln). Catalyzes the conversion of 2-thiouridine (S2U-RNA) to 2-selenouridine (Se2U-RNA). Acts in a two-step process involving geranylation of 2-thiouridine (S2U) to S-geranyl-2-thiouridine (geS2U) and subsequent selenation of the latter derivative to 2-selenouridine (Se2U) in the tRNA chain. The protein is tRNA 2-selenouridine synthase of Pseudomonas syringae pv. tomato (strain ATCC BAA-871 / DC3000).